A 152-amino-acid polypeptide reads, in one-letter code: MGLKLNELSPGVGAKKTAHRKGRGIGSGLGKTGGRGVKGQKSRSGSGVRRGFEGGQMPLFRRVPKFGFTSQMALTTAEVRLSELNKIDGDVVSVETLKAANIIRHDMKRARIILSGEITKAYTFKGVKVTKGAKAAIEAAGGTVEVTEGTEE.

A disordered region spans residues 1-54 (MGLKLNELSPGVGAKKTAHRKGRGIGSGLGKTGGRGVKGQKSRSGSGVRRGFEG). Over residues 24–37 (GIGSGLGKTGGRGV) the composition is skewed to gly residues.

This sequence belongs to the universal ribosomal protein uL15 family. Part of the 50S ribosomal subunit.

Functionally, binds to the 23S rRNA. This Psychrobacter sp. (strain PRwf-1) protein is Large ribosomal subunit protein uL15.